A 133-amino-acid polypeptide reads, in one-letter code: MTDEQIYAFCDTNKDDIRCKCIYPDKSIVRIGIDTRLPYYCWYEPCKRSDALLPASLKKNISRCNVSDCTISLGNVSITDSKLDVNNVCDSKRVATENIAVRYLNQEIRYPIIDIKWLPIGLLALAILILAFF.

The helical transmembrane segment at 112–132 (IIDIKWLPIGLLALAILILAF) threads the bilayer.

It belongs to the orthopoxvirus OPG104 family. In terms of assembly, part of a stable entry-fusion complex (EFC) which is at least composed of proteins OPG143, OPG147, OPG155, OPG086, OPG094, OPG107, OPG104, and OPG099. Formation of the viral membrane is necessary for the assembly of the complex.

Its subcellular location is the virion membrane. Envelope protein part of the entry-fusion complex responsible for the virus membrane fusion with host cell membrane during virus entry. Also plays a role in cell-cell fusion (syncytium formation). The polypeptide is Protein OPG104 (OPG104) (Cynomys gunnisoni (Gunnison's prairie dog)).